We begin with the raw amino-acid sequence, 235 residues long: Aspartate/glutamate leucyltransferase (235 aa).

Belongs to the R-transferase family. Bpt subfamily.

It is found in the cytoplasm. It catalyses the reaction N-terminal L-glutamyl-[protein] + L-leucyl-tRNA(Leu) = N-terminal L-leucyl-L-glutamyl-[protein] + tRNA(Leu) + H(+). It carries out the reaction N-terminal L-aspartyl-[protein] + L-leucyl-tRNA(Leu) = N-terminal L-leucyl-L-aspartyl-[protein] + tRNA(Leu) + H(+). Its function is as follows. Functions in the N-end rule pathway of protein degradation where it conjugates Leu from its aminoacyl-tRNA to the N-termini of proteins containing an N-terminal aspartate or glutamate. The sequence is that of Aspartate/glutamate leucyltransferase from Shewanella putrefaciens (strain CN-32 / ATCC BAA-453).